The primary structure comprises 101 residues: Ferredoxin-3 (101 aa).

2 consecutive 4Fe-4S ferredoxin-type domains span residues 17-46 (YLMKIDEQKCIGCGRCFKVCGRDVMSLHGL) and 70-100 (KVMALTGAENCIGCGACARVCPSECQTHAAL). Residues Cys26, Cys29, Cys32, Cys36, Cys80, Cys83, Cys86, and Cys90 each contribute to the [4Fe-4S] cluster site.

In terms of assembly, homodimer. [4Fe-4S] cluster is required as a cofactor.

In terms of biological role, ferredoxins are iron-sulfur proteins that transfer electrons in a wide variety of metabolic reactions. In Rhodobacter capsulatus (Rhodopseudomonas capsulata), this protein is Ferredoxin-3 (fdxB).